A 576-amino-acid polypeptide reads, in one-letter code: Mitogen-activated protein kinase 15 (576 aa).

The tract at residues 20 to 50 (RPSSSSSSNNHDQIQNPPTVSNPNDDEDLKK) is disordered. The span at 28–42 (NNHDQIQNPPTVSNP) shows a compositional bias: polar residues. A Protein kinase domain is found at 90-381 (YQIQEVVGKG…AEEALADPYF (292 aa)). Residues 96–104 (VGKGSYGVV) and Lys-119 contribute to the ATP site. Asp-216 serves as the catalytic Proton acceptor. Thr-252 carries the post-translational modification Phosphothreonine. The short motif at 252–254 (TDY) is the TXY element. Tyr-254 is subject to Phosphotyrosine. At Thr-257 the chain carries Phosphothreonine. Positions 458–535 (EENQGPGGRS…GGGYSARNLM (78 aa)) are disordered. Over residues 477 to 501 (LPRERVPASKNETVEERSNDIERRT) the composition is skewed to basic and acidic residues. Residues 504–520 (AVASTLDSPKASQQAEG) are compositionally biased toward polar residues.

Belongs to the protein kinase superfamily. CMGC Ser/Thr protein kinase family. MAP kinase subfamily. Interacts with MKK7. Post-translationally, dually phosphorylated on Thr-252 and Tyr-254, which activates the enzyme.

The enzyme catalyses L-seryl-[protein] + ATP = O-phospho-L-seryl-[protein] + ADP + H(+). The catalysed reaction is L-threonyl-[protein] + ATP = O-phospho-L-threonyl-[protein] + ADP + H(+). Its activity is regulated as follows. Activated by threonine and tyrosine phosphorylation. In Arabidopsis thaliana (Mouse-ear cress), this protein is Mitogen-activated protein kinase 15 (MPK15).